Here is a 99-residue protein sequence, read N- to C-terminus: Large ribosomal subunit protein uL23 (99 aa).

Belongs to the universal ribosomal protein uL23 family. Part of the 50S ribosomal subunit. Contacts protein L29, and trigger factor when it is bound to the ribosome.

Its function is as follows. One of the early assembly proteins it binds 23S rRNA. One of the proteins that surrounds the polypeptide exit tunnel on the outside of the ribosome. Forms the main docking site for trigger factor binding to the ribosome. This chain is Large ribosomal subunit protein uL23, found in Magnetococcus marinus (strain ATCC BAA-1437 / JCM 17883 / MC-1).